We begin with the raw amino-acid sequence, 128 residues long: Natriuretic peptides A (128 aa).

Residues 36-84 are disordered; the sequence is QVASEQNEEAGAVLSALPEVPSWPGEAGPAQREGGALGRGPWDSSDRSA. Positions 68-78 are excised as a propeptide; that stretch reads EGGALGRGPWD. At Ser104 the chain carries Phosphoserine. A disulfide bridge connects residues Cys105 and Cys121. Residues 122 to 126 form an important for degradation of atrial natriuretic peptide by IDE region; it reads NSFRY.

This sequence belongs to the natriuretic peptide family. In terms of assembly, homodimer; disulfide-linked antiparallel dimer. Post-translationally, the precursor molecule is proteolytically cleaved by CORIN at Arg-98 to produce atrial natriuretic peptide. Undergoes further proteolytic cleavage by unknown proteases to give rise to long-acting natriuretic peptide, vessel dilator and kaliuretic peptide. Additional processing gives rise to the auriculin and atriopeptin peptides. In the kidneys, alternative processing by an unknown protease results in the peptide urodilatin. Cleavage by MME initiates degradation of the factor and thereby regulates its activity. Degraded by IDE (in vitro). During IDE degradation, the resulting products can temporarily stimulate NPR2 to produce cGMP, before the fragments are completely degraded and inactivated by IDE (in vitro). In terms of processing, degraded by IDE. Post-translationally, phosphorylation on Ser-104 decreases vasorelaxant activity.

It is found in the secreted. The protein resides in the perikaryon. The protein localises to the cell projection. Functionally, hormone that plays a key role in mediating cardio-renal homeostasis, and is involved in vascular remodeling and regulating energy metabolism. Acts by specifically binding and stimulating NPR1 to produce cGMP, which in turn activates effector proteins, such as PRKG1, that drive various biological responses. Regulates vasodilation, natriuresis, diuresis and aldosterone synthesis and is therefore essential for regulating blood pressure, controlling the extracellular fluid volume and maintaining the fluid-electrolyte balance. Also involved in inhibiting cardiac remodeling and cardiac hypertrophy by inducing cardiomyocyte apoptosis and attenuating the growth of cardiomyocytes and fibroblasts. Plays a role in female pregnancy by promoting trophoblast invasion and spiral artery remodeling in uterus, and thus prevents pregnancy-induced hypertension. In adipose tissue, acts in various cGMP- and PKG-dependent pathways to regulate lipid metabolism and energy homeostasis. This includes up-regulating lipid metabolism and mitochondrial oxygen utilization by activating the AMP-activated protein kinase (AMPK), and increasing energy expenditure by acting via MAPK11 to promote the UCP1-dependent thermogenesis of brown adipose tissue. Binds the clearance receptor NPR3 which removes the hormone from circulation. Its function is as follows. May have a role in cardio-renal homeostasis through regulation of natriuresis, diuresis, vasodilation, and inhibiting aldosterone synthesis. In vitro, promotes the production of cGMP and induces vasodilation. May promote natriuresis, at least in part, by enhancing prostaglandin E2 synthesis resulting in the inhibition of renal Na+-K+-ATPase. However reports on the involvement of this peptide in mammal blood volume and blood pressure homeostasis are conflicting; according to a report, in vivo it is not sufficient to activate cGMP and does not inhibit collecting duct transport nor effect diuresis and natriuresis. Appears to bind to specific receptors that are distinct from the receptors bound by atrial natriuretic peptide and vessel dilator. Possibly enhances protein excretion in urine by decreasing proximal tubular protein reabsorption. In terms of biological role, may have a role in cardio-renal homeostasis through regulation of natriuresis, diuresis, and vasodilation. In vitro, promotes the production of cGMP and induces vasodilation. May promote natriuresis, at least in part, by enhancing prostaglandin E2 synthesis resulting in the inhibition of renal Na+-K+-ATPase. However reports on the involvement of this peptide in mammal blood volume and blood pressure homeostasis are conflicting; according to a report it is not sufficient to activate cGMP and does not inhibit collecting duct transport nor effect diuresis and natriuresis. Appears to bind to specific receptors that are distinct from the receptors bound by the atrial natriuretic and long-acting natriuretic peptides. Possibly functions in protein excretion in urine by maintaining the integrity of the proximal tubules and enhancing protein excretion by decreasing proximal tubular protein reabsorption. May have a role in cardio-renal homeostasis through regulation of diuresis and inhibiting aldosterone synthesis. In vitro, promotes the production of cGMP and induces vasodilation. May promote natriuresis, at least in part, by enhancing prostaglandin E2 synthesis resulting in the inhibition of renal Na+-K+-ATPase. May have a role in potassium excretion but not sodium excretion (natriuresis). Possibly enhances protein excretion in urine by decreasing proximal tubular protein reabsorption. Functionally, hormone produced in the kidneys that appears to be important for maintaining cardio-renal homeostasis. Mediates vasodilation, natriuresis and diuresis primarily in the renal system, in order to maintain the extracellular fluid volume and control the fluid-electrolyte balance. Specifically binds and stimulates cGMP production by renal transmembrane receptors, likely NPR1. Urodilatin not ANP, may be the natriuretic peptide responsible for the regulation of sodium and water homeostasis in the kidney. Its function is as follows. May have a role in cardio-renal homeostasis through regulation of natriuresis and vasodilation. In vivo promotes natriuresis and in vitro, vasodilates renal artery strips. In terms of biological role, may have a role in cardio-renal homeostasis through regulation of regulation of natriuresis and vasodilation. In vivo promotes natriuresis. In vitro, vasodilates intestinal smooth muscle but not smooth muscle strips. May have a role in cardio-renal homeostasis through regulation of natriuresis and vasodilation. In vivo promotes natriuresis. In vitro, selectively vasodilates intestinal and vascular smooth muscle strips. Functionally, may have a role in cardio-renal homeostasis through regulation of natriuresis and vasodilation. In vivo promotes natriuresis. In vitro, selectively vasodilates intestinal smooth muscle but not vascular smooth muscle strips. The chain is Natriuretic peptides A (NPPA) from Cavia porcellus (Guinea pig).